A 778-amino-acid polypeptide reads, in one-letter code: IQ domain-containing protein E (778 aa).

2 disordered regions span residues 1 to 71 (MSLG…LSSR) and 83 to 108 (SSKQGSVAQPPSPTLTSEHAWTHPPS). The segment covering 37–49 (KPPSTSPKSPYYS) has biased composition (low complexity). The segment covering 83–101 (SSKQGSVAQPPSPTLTSEH) has biased composition (polar residues). Residues 157 to 323 (LHMQKSDVDL…DLDRMLSNSP (167 aa)) adopt a coiled-coil conformation. The residue at position 322 (S322) is a Phosphoserine. Disordered stretches follow at residues 348–392 (KKVS…EDLP), 443–462 (ETAREGEKGRQEQEQALREE), 474–529 (EEAK…SEER), and 573–612 (LVRSKVPDSRSPSLPGLLSPLNQSSPAPRVLSPISPAEEN). The segment covering 352-362 (SSESPKQSTSE) has biased composition (low complexity). The stretch at 398–486 (EEQEHLQGTV…KREEKNSFVA (89 aa)) forms a coiled coil. 2 IQ domains span residues 553–582 (LDEAATVLQAAFRGHLARSKLVRSKVPDSR) and 615–644 (QEEAVIVIQSILRGYLAQARFIASCCREIA). The span at 581–598 (SRSPSLPGLLSPLNQSSP) shows a compositional bias: low complexity. The span at 651–662 (TVSLTPSGSASP) shows a compositional bias: polar residues. The segment at 651-778 (TVSLTPSGSA…LPRKKSPSPF (128 aa)) is disordered. S661 bears the Phosphoserine mark. Residues 672-686 (IRKELCASEELRETS) show a composition bias toward basic and acidic residues. Residues 739 to 752 (PSPPELQPLSPPPV) are compositionally biased toward pro residues.

Component of the EvC complex composed of EFCAB7, IQCE, EVC2 and EVC; built from two subcomplexes, EVC2:EVC and EFCAB7:IQCE. Interacts (via N-terminus) with EFCAB7 (via EF-hands 1 and 2); this interaction anchors the EVC-EVC2 complex in a signaling microdomain at the base of cilia and stimulates the Hedgehog (Hh) pathway. Interacts with EVC2 (via N-terminal end). Interacts with EVC.

The protein resides in the cell projection. It localises to the cilium membrane. Its function is as follows. Component of the EvC complex that positively regulates ciliary Hedgehog (Hh) signaling. Required for proper limb morphogenesis. The polypeptide is IQ domain-containing protein E (Iqce) (Mus musculus (Mouse)).